We begin with the raw amino-acid sequence, 198 residues long: MICOS complex subunit MIC26 (198 aa).

A signal peptide spans 1 to 25; it reads MFKVIQRSVGPASLSLLTFKVYAAP. Residues 108–128 traverse the membrane as a helical segment; the sequence is PGFFPRLGVIGFAGLIGLLLA. Ser-162 carries O-linked (Xyl...) (chondroitin sulfate) serine glycosylation.

Belongs to the apolipoprotein O/MICOS complex subunit Mic27 family. Component of the mitochondrial contact site and cristae organizing system (MICOS) complex, composed of at least MICOS10/MIC10, CHCHD3/MIC19, CHCHD6/MIC25, APOOL/MIC27, IMMT/MIC60, APOO/MIC23/MIC26 and MICOS13/MIC13. This complex was also known under the names MINOS or MitOS complex. he MICOS complex associates with mitochondrial outer membrane proteins SAMM50, MTX1 and MTX2 (together described as components of the mitochondrial outer membrane sorting assembly machinery (SAM) complex) and DNAJC11, mitochondrial inner membrane protein TMEM11 and with HSPA9. The MICOS and SAM complexes together with DNAJC11 are part of a large protein complex spanning both membranes termed the mitochondrial intermembrane space bridging (MIB) complex. Interacts with IMMT/MIC60. Interacts with MICOS10/MIC10 and APOOL/MIC27. Post-translationally, O-glycosylation; glycosaminoglycan of chondroitin-sulfate type. Expressed in all tissues examined. Up-regulated in diabetic heart.

It is found in the mitochondrion inner membrane. Its subcellular location is the secreted. The protein localises to the mitochondrion. It localises to the golgi apparatus membrane. The protein resides in the endoplasmic reticulum membrane. Component of the MICOS complex, a large protein complex of the mitochondrial inner membrane that plays crucial roles in the maintenance of crista junctions, inner membrane architecture, and formation of contact sites to the outer membrane. Plays a crucial role in crista junction formation and mitochondrial function. Can promote cardiac lipotoxicity by enhancing mitochondrial respiration and fatty acid metabolism in cardiac myoblasts. Promotes cholesterol efflux from macrophage cells. Detected in HDL, LDL and VLDL. Secreted by a microsomal triglyceride transfer protein (MTTP)-dependent mechanism, probably as a VLDL-associated protein that is subsequently transferred to HDL. This is MICOS complex subunit MIC26 (APOO) from Homo sapiens (Human).